Here is a 927-residue protein sequence, read N- to C-terminus: Solute carrier family 12 protein B0303.11 (927 aa).

Over 1 to 23 (MPSSTASSEDAPITSTAWMNWKD) the chain is Cytoplasmic. A helical transmembrane segment spans residues 24-44 (VFLKCVQPMLAVVLLLRFSSI). The Extracellular segment spans residues 45-53 (VDEAGFTTT). A helical membrane pass occupies residues 54-74 (IILVFFTFLVSLVTGWSACTV). Residues 75–95 (VSRKSSEVGFVKTMLAYSSTE) lie on the Cytoplasmic side of the membrane. A helical transmembrane segment spans residues 96–116 (FAISFSIIYLFCLLVATSTFL). Over 117 to 141 (TSAAEAVLHIFSTFSLELLDGATHD) the chain is Extracellular. The helical transmembrane segment at 142–159 (LRLVSSVLSLITLALCMV) threads the bilayer. The Cytoplasmic segment spans residues 160-165 (RNRNAR). The helical transmembrane segment at 166 to 186 (FVRTFIFALTCIAIALQLSSV) threads the bilayer. Residues 187 to 212 (MFRYGEYQLRRVSDRNAMIPSPPNEE) are Extracellular-facing. The helical transmembrane segment at 213 to 233 (ISTIFAQLFPAAMCGLTILNI) threads the bilayer. Residues 234–244 (GSKLQNTAPRG) are Cytoplasmic-facing. Residues 245–265 (ALIAIAVSACFYGAAAMLDYV) form a helical membrane-spanning segment. Residues 266–284 (EFFARTSTSNSTGSAEYNE) lie on the Extracellular side of the membrane. Asparagine 275 is a glycosylation site (N-linked (GlcNAc...) asparagine). A helical transmembrane segment spans residues 285–305 (FLSYIYTTVPMAIVITLACVL). Over 306-345 (SAVSTLKYAAVILQSLGRSNQCRCILWLAKGFGERDIPIR) the chain is Cytoplasmic. The helical transmembrane segment at 346–366 (CLLLLSTVQILVSAIGSYDIL) threads the bilayer. Residue cysteine 367 is a topological domain, extracellular. Residues 368–388 (IPTTVFYLFAYALFNFYVFLV) traverse the membrane as a helical segment. Residues 389-394 (KLSDPE) are Cytoplasmic-facing. Residues 395–415 (IPSPPTLLSLAISAACFIASL) form a helical membrane-spanning segment. Residues 416–419 (YTNR) lie on the Extracellular side of the membrane. The helical transmembrane segment at 420-440 (HLALFIASIFAISYCSLLYII) threads the bilayer. At 441 to 927 (RRERNEDGEE…SMSALRLKFP (487 aa)) the chain is on the cytoplasmic side.

Belongs to the SLC12A transporter family.

It is found in the cell membrane. This chain is Solute carrier family 12 protein B0303.11, found in Caenorhabditis elegans.